The sequence spans 329 residues: UDP-2,3-diacylglucosamine pyrophosphatase LpxG (329 aa).

A helical transmembrane segment spans residues 2–24; sequence FVFVGSTVSLTAIVAAPVLTWIW. Positions 59, 61, 91, 123, 257, and 259 each coordinate a divalent metal cation.

It belongs to the metallophosphoesterase superfamily. Mn(2+) is required as a cofactor.

The protein resides in the cell inner membrane. The catalysed reaction is UDP-2,3-diacyl-alpha-D-glucosamine + H2O = 2,3-diacyl-alpha-D-glucosaminyl 1-phosphate + UMP + 2 H(+). It functions in the pathway glycolipid biosynthesis; lipid IV(A) biosynthesis. Its function is as follows. Hydrolyzes the pyrophosphate bond of UDP-2,3-diacylglucosamine to form 2,3-diacylglucosamine 1-phosphate (lipid X) and UMP by catalyzing the attack of water at the alpha-P atom. Involved in the biosynthesis of lipid A, a phosphorylated glycolipid that anchors the lipooligosaccharide (LOS) to the outer membrane of the cell. The chain is UDP-2,3-diacylglucosamine pyrophosphatase LpxG from Chlamydia muridarum (strain MoPn / Nigg).